Reading from the N-terminus, the 505-residue chain is Glutamate--tRNA ligase (505 aa).

The short motif at Pro11 to Gly21 is the 'HIGH' region element. Residues Lys260–Arg264 carry the 'KMSKS' region motif. Lys263 contributes to the ATP binding site.

It belongs to the class-I aminoacyl-tRNA synthetase family. Glutamate--tRNA ligase type 1 subfamily. In terms of assembly, monomer.

The protein localises to the cytoplasm. It catalyses the reaction tRNA(Glu) + L-glutamate + ATP = L-glutamyl-tRNA(Glu) + AMP + diphosphate. Catalyzes the attachment of glutamate to tRNA(Glu) in a two-step reaction: glutamate is first activated by ATP to form Glu-AMP and then transferred to the acceptor end of tRNA(Glu). This chain is Glutamate--tRNA ligase, found in Christiangramia forsetii (strain DSM 17595 / CGMCC 1.15422 / KT0803) (Gramella forsetii).